Reading from the N-terminus, the 1607-residue chain is MSDDEELQLAIEISKKTFKDEQKLRSNDLDLIRFESPDEPARQRKINQIKQLYEANSPGPSSYSGSLATSPIDFRPVYNEPRAGPIPHSQSYPRNYFQDWSAIASTSQPPAFPPPPRPPKPEQYKFPPAPSVPLLHDRYFVPPPPPVPPRHSRVQQSPPVPIHPTPPVSSTPLRHSAPSFASDSQQFLSPIKPFEISFNSTVDTSSNQTGSHDHSIQYQPLTHLYVPYVMHSLNSSYGALLNGDLIDLSAFEDSSNASQDEIRKEFDPLFISTYSTDTPSPDNSMPAVNAYFSKPIDEPECVGGAKLIQENIEFPSSSFCLIDCPNGIEEQVKKLCKRNLIRKDMTPDFFIAPTVDYMVTTASTVKVVVYKDHSWKANKSNGKAMICAIDEKMDIITTQALSLFDSELPTDKEYGLKIYGLNQFLSSDSLLGSNLYTGHCLLNGDDVKLDLGVFAPNSRIYEQTLESWNLMKSQVKYSTVVDKEDVENTLGHLASEMSQYEIAFNDGSTLKLSSSSQRVKQVIMLLCKCLHGIVPEKLYNEMQKYLASTTEDQLVHHRNDFLREIHSFLELYCRCTVSRYNIPPLQIITKPKVEVLSKMDFLQIMLNSVHSIPEHWQSQYSEFYMSLDLYHGTQVLDGFSNKVPKTIKNDHFFPRIPLDLYAKFKRLNLCQYPRETRIVVSISGTVRNSAQAANEYNPDIVMLGYCSVPLYDENLFMRQGPLFLPLTLLKKQPMLKPFGPYPYIKDARDPILIMSFKIWDTEIYFPNVVIDMQCIPQDFATLDIETQEYLLELIENQDTSTLETDDQDLIWQKRLHLTNQPEALPLVLSSLQDWSFGFVMRVYQILEEWAPLRPEIAMEFLLPKYPDERIRAHAVQSLARGSTDFLYHTIPQFIEALRFELYEKSALADFILELSFVSLDFTFEIYWQLQQRVDHCAVDDLPYAIRCQNLQQKMIDEHENPNLKTDIKLQHELLNELDSIQDDLRSKSGDSEIERLHRLRTRLGILDSKLLQNKVRLPICPAFDCTGVRIEECSVFNSNAKPLKIVFRGLNMNYSIIHKRDDDMRQDAFVMKMLNEMDRIWKSNGLDLRMITFRIMPVGYRRGMGELVLNCATLMEIQKEEGLRGVLNDEILRKWLMKHNSDEFAYKEAQENFIRSCAGWCIVTYVLGIGDRHNDNILFTKNGHVFHIDFGKYMGDWQMAAGFRRDRVPFVFTTEMFHVINNGRAPTQYNQKFIDYCCKAFNHLRRNKNTLTNLLRIMACSDIPGINMDSLAFVENNLMLDLSDTDATVQFTAMIQNSLGSAFVRLNFVAHTVAQFISSRPSFSKQDPNKLSFVPELYTENSDGRISRVTVLKFEKHCIPNKIYMYKVEVHRKNVAVSSFIYRSFAEFEELHTKLRARFPMMAVSLNTISNLRSNVRAVAQKRIIHVQKFLIYLFNQVDEICHCDLVYTFFHSILRDNKCDTYIDESLDMPSQCQIYLKIEYNSVKETLSVFIGHAKYLALLQNNQQPDPYVKTYVRPDLRNQSKQKTQVVRGTRHPTFNQDLNYTEFPIEILSTRVLEVSIWNNGGYLVKHKMYMLCIPLLKVKKLAESRKNCRTLEGWFNCEKCV.

One can recognise a UIM domain in the interval 2 to 21 (SDDEELQLAIEISKKTFKDE). 3 disordered regions span residues 54–91 (EANS…HSQS), 105–128 (STSQ…KFPP), and 142–182 (PPPP…SFAS). Residues 58–69 (PGPSSYSGSLAT) are compositionally biased toward polar residues. Residues 158 to 169 (PPVPIHPTPPVS) show a composition bias toward pro residues. Residues 362–453 (ASTVKVVVYK…GDDVKLDLGV (92 aa)) form the PI3K-RBD domain. Residues 598-766 (KMDFLQIMLN…KIWDTEIYFP (169 aa)) form the C2 PI3K-type domain. The 178-residue stretch at 776-953 (PQDFATLDIE…AIRCQNLQQK (178 aa)) folds into the PIK helical domain. A PI3K/PI4K catalytic domain is found at 1029-1303 (RIEECSVFNS…MIQNSLGSAF (275 aa)). A G-loop region spans residues 1035–1041 (VFNSNAK). The tract at residues 1168–1176 (GIGDRHNDN) is catalytic loop. An activation loop region spans residues 1187 to 1213 (HIDFGKYMGDWQMAAGFRRDRVPFVFT). The region spanning 1344–1458 (GRISRVTVLK…TFFHSILRDN (115 aa)) is the PX domain. In terms of domain architecture, C2 spans 1472 to 1601 (SQCQIYLKIE…KNCRTLEGWF (130 aa)).

The protein belongs to the PI3/PI4-kinase family.

It localises to the cell projection. Its subcellular location is the phagocytic cup. The protein resides in the cytoplasmic vesicle. It is found in the phagosome membrane. The protein localises to the cytoplasm. It catalyses the reaction a 1,2-diacyl-sn-glycero-3-phospho-(1D-myo-inositol) + ATP = a 1,2-diacyl-sn-glycero-3-phospho-(1D-myo-inositol-3-phosphate) + ADP + H(+). Its function is as follows. Phosphatidylinositol 3-kinase involved in clearance of apoptotic cell corpses by phagosomes. Phagosome maturation requires two sequential and non-overlapping pulses of phosphatidylinositol-3-phosphate (PI3P) on the vesicle surface which mediates recruitment of sortins snx-1 and lst-4 and small GTPases rab-5, rab-2 and rab-7. The first pulse is initiated by piki-1, then maintained by vps-34 which also produces the second pulse. Unlike vps-34, not involved in the formation of PI3P in early endosomes. The chain is Phosphatidylinositol 3-kinase piki-1 from Caenorhabditis elegans.